Reading from the N-terminus, the 107-residue chain is L-rhamnose mutarotase (107 aa).

Tyrosine 18 contributes to the substrate binding site. Histidine 22 acts as the Proton donor in catalysis. Substrate contacts are provided by residues tyrosine 41 and 76–77; that span reads WW.

This sequence belongs to the rhamnose mutarotase family. Homodimer.

Its subcellular location is the cytoplasm. The enzyme catalyses alpha-L-rhamnose = beta-L-rhamnose. The protein operates within carbohydrate metabolism; L-rhamnose metabolism. Functionally, involved in the anomeric conversion of L-rhamnose. In Paraburkholderia phytofirmans (strain DSM 17436 / LMG 22146 / PsJN) (Burkholderia phytofirmans), this protein is L-rhamnose mutarotase.